The chain runs to 63 residues: Large ribosomal subunit protein uL29 (63 aa).

The protein belongs to the universal ribosomal protein uL29 family.

The sequence is that of Large ribosomal subunit protein uL29 from Bacillus cereus (strain ATCC 14579 / DSM 31 / CCUG 7414 / JCM 2152 / NBRC 15305 / NCIMB 9373 / NCTC 2599 / NRRL B-3711).